The following is a 384-amino-acid chain: Alanine racemase (384 aa).

Catalysis depends on Lys-46, which acts as the Proton acceptor; specific for D-alanine. Lys-46 is modified (N6-(pyridoxal phosphate)lysine). Residue Arg-144 participates in substrate binding. Tyr-278 acts as the Proton acceptor; specific for L-alanine in catalysis. A substrate-binding site is contributed by Met-326.

This sequence belongs to the alanine racemase family. Requires pyridoxal 5'-phosphate as cofactor.

It catalyses the reaction L-alanine = D-alanine. Its pathway is amino-acid biosynthesis; D-alanine biosynthesis; D-alanine from L-alanine: step 1/1. Catalyzes the interconversion of L-alanine and D-alanine. May also act on other amino acids. The polypeptide is Alanine racemase (alr) (Frankia casuarinae (strain DSM 45818 / CECT 9043 / HFP020203 / CcI3)).